Here is a 257-residue protein sequence, read N- to C-terminus: Succinate dehydrogenase subunit 5, mitochondrial (257 aa).

A mitochondrion-targeting transit peptide spans 1–89 (MGTLGRAIHT…AMGMGQVRRF (89 aa)).

In terms of assembly, component of complex II composed of eight subunits in plants: four classical SDH subunits SDH1, SDH2, SDH3 and SDH4 (a flavoprotein (FP), an iron-sulfur protein (IP), and a cytochrome b composed of a large and a small subunit.), as well as four subunits unknown in mitochondria from bacteria and heterotrophic eukaryotes.

Its subcellular location is the mitochondrion inner membrane. Its pathway is carbohydrate metabolism; tricarboxylic acid cycle. This Arabidopsis thaliana (Mouse-ear cress) protein is Succinate dehydrogenase subunit 5, mitochondrial.